The chain runs to 267 residues: Trehalose-phosphate phosphatase (267 aa).

The active-site Nucleophile is the aspartate 20. Mg(2+) is bound by residues aspartate 20, aspartate 22, and aspartate 198. 20–22 (DLD) serves as a coordination point for substrate.

This sequence belongs to the trehalose phosphatase family. The cofactor is Mg(2+).

It catalyses the reaction alpha,alpha-trehalose 6-phosphate + H2O = alpha,alpha-trehalose + phosphate. Its pathway is glycan biosynthesis; trehalose biosynthesis. Its function is as follows. Removes the phosphate from trehalose 6-phosphate to produce free trehalose. This chain is Trehalose-phosphate phosphatase (otsB), found in Salmonella typhimurium (strain LT2 / SGSC1412 / ATCC 700720).